A 203-amino-acid polypeptide reads, in one-letter code: Fucoxanthin-chlorophyll a-c binding protein, chloroplastic (203 aa).

A chloroplast-targeting transit peptide spans Met1–Met30.

Belongs to the fucoxanthin chlorophyll protein family. In terms of assembly, the LHC complex of chromophytic algae is composed of fucoxanthin, chlorophyll A and C bound non-covalently by fucoxanthin chlorophyll proteins (FCPs). The ratio of pigments in this LHC is; fucoxanthin: chlorophyll C: chlorophyll A; (0.6-1): (0.1-0.3): (1).

Its subcellular location is the plastid. The protein resides in the chloroplast thylakoid membrane. Its function is as follows. The light-harvesting complex (LHC) functions as a light receptor, it captures and delivers excitation energy to photosystems with which it is closely associated. Energy is transferred from the carotenoid and chlorophyll C (or B) to chlorophyll A and the photosynthetic reaction centers where it is used to synthesize ATP and reducing power. The polypeptide is Fucoxanthin-chlorophyll a-c binding protein, chloroplastic (FCPA) (Trieres chinensis (Marine centric diatom)).